The following is a 112-amino-acid chain: T cell receptor alpha variable 30 (112 aa).

An N-terminal signal peptide occupies residues 1-21; the sequence is METLLKVLSGTLLWQLTWVRS. Residues 24 to 112 enclose the Ig-like domain; the sequence is PVQSPQAVIL…YSGTYFCGTE (89 aa). N-linked (GlcNAc...) asparagine glycosylation occurs at Asn-42. Residues Cys-43 and Cys-109 are joined by a disulfide bond.

Alpha-beta TR is a heterodimer composed of an alpha and beta chain; disulfide-linked. The alpha-beta TR is associated with the transmembrane signaling CD3 coreceptor proteins to form the TR-CD3 (TcR or TCR). The assembly of alpha-beta TR heterodimers with CD3 occurs in the endoplasmic reticulum where a single alpha-beta TR heterodimer associates with one CD3D-CD3E heterodimer, one CD3G-CD3E heterodimer and one CD247 homodimer forming a stable octameric structure. CD3D-CD3E and CD3G-CD3E heterodimers preferentially associate with TR alpha and TR beta chains, respectively. The association of the CD247 homodimer is the last step of TcR assembly in the endoplasmic reticulum and is required for transport to the cell surface.

The protein resides in the cell membrane. Functionally, v region of the variable domain of T cell receptor (TR) alpha chain that participates in the antigen recognition. Alpha-beta T cell receptors are antigen specific receptors which are essential to the immune response and are present on the cell surface of T lymphocytes. Recognize peptide-major histocompatibility (MH) (pMH) complexes that are displayed by antigen presenting cells (APC), a prerequisite for efficient T cell adaptive immunity against pathogens. Binding of alpha-beta TR to pMH complex initiates TR-CD3 clustering on the cell surface and intracellular activation of LCK that phosphorylates the ITAM motifs of CD3G, CD3D, CD3E and CD247 enabling the recruitment of ZAP70. In turn ZAP70 phosphorylates LAT, which recruits numerous signaling molecules to form the LAT signalosome. The LAT signalosome propagates signal branching to three major signaling pathways, the calcium, the mitogen-activated protein kinase (MAPK) kinase and the nuclear factor NF-kappa-B (NF-kB) pathways, leading to the mobilization of transcription factors that are critical for gene expression and essential for T cell growth and differentiation. The T cell repertoire is generated in the thymus, by V-(D)-J rearrangement. This repertoire is then shaped by intrathymic selection events to generate a peripheral T cell pool of self-MH restricted, non-autoaggressive T cells. Post-thymic interaction of alpha-beta TR with the pMH complexes shapes TR structural and functional avidity. This is T cell receptor alpha variable 30 from Homo sapiens (Human).